The primary structure comprises 71 residues: UPF0352 protein Spea_1764 (71 aa).

This sequence belongs to the UPF0352 family.

The sequence is that of UPF0352 protein Spea_1764 from Shewanella pealeana (strain ATCC 700345 / ANG-SQ1).